The chain runs to 224 residues: Endonuclease NucS (224 aa).

The protein belongs to the NucS endonuclease family.

It is found in the cytoplasm. Its function is as follows. Cleaves both 3' and 5' ssDNA extremities of branched DNA structures. The protein is Endonuclease NucS of Mycolicibacterium smegmatis (strain ATCC 700084 / mc(2)155) (Mycobacterium smegmatis).